Reading from the N-terminus, the 197-residue chain is dITP/XTP pyrophosphatase (197 aa).

9–14 contributes to the substrate binding site; that stretch reads TNNLNK. Mg(2+) contacts are provided by E42 and D71. D71 acts as the Proton acceptor in catalysis. Substrate contacts are provided by residues S72, 153–156, K176, and 181–182; these read FGYD and HR.

It belongs to the HAM1 NTPase family. As to quaternary structure, homodimer. It depends on Mg(2+) as a cofactor.

It carries out the reaction XTP + H2O = XMP + diphosphate + H(+). The enzyme catalyses dITP + H2O = dIMP + diphosphate + H(+). It catalyses the reaction ITP + H2O = IMP + diphosphate + H(+). Its function is as follows. Pyrophosphatase that catalyzes the hydrolysis of nucleoside triphosphates to their monophosphate derivatives, with a high preference for the non-canonical purine nucleotides XTP (xanthosine triphosphate), dITP (deoxyinosine triphosphate) and ITP. Seems to function as a house-cleaning enzyme that removes non-canonical purine nucleotides from the nucleotide pool, thus preventing their incorporation into DNA/RNA and avoiding chromosomal lesions. This Leptospira interrogans serogroup Icterohaemorrhagiae serovar copenhageni (strain Fiocruz L1-130) protein is dITP/XTP pyrophosphatase.